Here is a 105-residue protein sequence, read N- to C-terminus: Met repressor (105 aa).

It belongs to the MetJ family. As to quaternary structure, homodimer.

Its subcellular location is the cytoplasm. This regulatory protein, when combined with SAM (S-adenosylmethionine) represses the expression of the methionine regulon and of enzymes involved in SAM synthesis. The chain is Met repressor from Haemophilus ducreyi (strain 35000HP / ATCC 700724).